A 142-amino-acid chain; its full sequence is Large ribosomal subunit protein uL11 (142 aa).

This sequence belongs to the universal ribosomal protein uL11 family. Part of the ribosomal stalk of the 50S ribosomal subunit. Interacts with L10 and the large rRNA to form the base of the stalk. L10 forms an elongated spine to which L12 dimers bind in a sequential fashion forming a multimeric L10(L12)X complex. In terms of processing, one or more lysine residues are methylated.

Forms part of the ribosomal stalk which helps the ribosome interact with GTP-bound translation factors. The protein is Large ribosomal subunit protein uL11 of Shigella boydii serotype 18 (strain CDC 3083-94 / BS512).